A 269-amino-acid polypeptide reads, in one-letter code: Expansin-A32 (269 aa).

A signal peptide spans methionine 1–alanine 25. One can recognise an Expansin-like EG45 domain in the interval aspartate 60–glycine 174. Residues tyrosine 184–alanine 264 enclose the Expansin-like CBD domain.

Belongs to the expansin family. Expansin A subfamily.

The protein localises to the secreted. Its subcellular location is the cell wall. It localises to the membrane. Its function is as follows. May cause loosening and extension of plant cell walls by disrupting non-covalent bonding between cellulose microfibrils and matrix glucans. No enzymatic activity has been found. May be required for rapid internodal elongation in deepwater rice during submergence. The chain is Expansin-A32 (EXPA32) from Oryza sativa subsp. japonica (Rice).